Here is a 359-residue protein sequence, read N- to C-terminus: Peptide chain release factor 1 (359 aa).

An N5-methylglutamine modification is found at Gln236.

It belongs to the prokaryotic/mitochondrial release factor family. In terms of processing, methylated by PrmC. Methylation increases the termination efficiency of RF1.

It is found in the cytoplasm. Peptide chain release factor 1 directs the termination of translation in response to the peptide chain termination codons UAG and UAA. This is Peptide chain release factor 1 from Streptococcus pneumoniae (strain Taiwan19F-14).